The following is a 330-amino-acid chain: MNAYYEQDADLGYLQGKNIAILGYGSQGHAHALNLKESGLNVCVGLRPDSSSCDRAREAGLQVNTVAEAVKWADIVMVLLPDQYQKAIYETEIAPNLQPGNTLAFAHGFNIHYNQIVPDKSVNVIMIAPKSPGHLVRRTYTQGNGVPCLIAVHQDATGEARQQALAWAKGLGGTKAGVIETTFKNETETDLFGEQAVLCGGSAELIKAGFETLVEAGYPEELAYFECMHELKLIVDLYYEGGLSRMNFSVSDTAEYGGMTRGPRVITPAVKAEMKKILEEVQDGRFAKEFIDECNGGYKNLNRLRAENSGHAIEKVGSKLRDMMSWLIKK.

A KARI N-terminal Rossmann domain is found at 1-181 (MNAYYEQDAD…GGTKAGVIET (181 aa)). NADP(+) is bound by residues 24–27 (YGSQ), arginine 47, serine 50, serine 52, and 82–85 (DQYQ). The active site involves histidine 107. Residue glycine 133 participates in NADP(+) binding. A KARI C-terminal knotted domain is found at 182–327 (TFKNETETDL…SKLRDMMSWL (146 aa)). Positions 190, 194, 226, and 230 each coordinate Mg(2+). Substrate is bound at residue serine 251.

This sequence belongs to the ketol-acid reductoisomerase family. It depends on Mg(2+) as a cofactor.

It catalyses the reaction (2R)-2,3-dihydroxy-3-methylbutanoate + NADP(+) = (2S)-2-acetolactate + NADPH + H(+). It carries out the reaction (2R,3R)-2,3-dihydroxy-3-methylpentanoate + NADP(+) = (S)-2-ethyl-2-hydroxy-3-oxobutanoate + NADPH + H(+). Its pathway is amino-acid biosynthesis; L-isoleucine biosynthesis; L-isoleucine from 2-oxobutanoate: step 2/4. It participates in amino-acid biosynthesis; L-valine biosynthesis; L-valine from pyruvate: step 2/4. Involved in the biosynthesis of branched-chain amino acids (BCAA). Catalyzes an alkyl-migration followed by a ketol-acid reduction of (S)-2-acetolactate (S2AL) to yield (R)-2,3-dihydroxy-isovalerate. In the isomerase reaction, S2AL is rearranged via a Mg-dependent methyl migration to produce 3-hydroxy-3-methyl-2-ketobutyrate (HMKB). In the reductase reaction, this 2-ketoacid undergoes a metal-dependent reduction by NADPH to yield (R)-2,3-dihydroxy-isovalerate. In Chlorobium limicola (strain DSM 245 / NBRC 103803 / 6330), this protein is Ketol-acid reductoisomerase (NADP(+)).